The primary structure comprises 367 residues: Glutamate 5-kinase (367 aa).

ATP is bound at residue lysine 10. 3 residues coordinate substrate: serine 50, aspartate 137, and asparagine 149. ATP contacts are provided by residues 169–170 (TD) and 211–217 (TGGMSTK). The 79-residue stretch at 275-353 (AGEITVDEGA…QEIDAILGYE (79 aa)) folds into the PUA domain.

The protein belongs to the glutamate 5-kinase family.

It localises to the cytoplasm. The enzyme catalyses L-glutamate + ATP = L-glutamyl 5-phosphate + ADP. Its pathway is amino-acid biosynthesis; L-proline biosynthesis; L-glutamate 5-semialdehyde from L-glutamate: step 1/2. Functionally, catalyzes the transfer of a phosphate group to glutamate to form L-glutamate 5-phosphate. The polypeptide is Glutamate 5-kinase (Escherichia coli O81 (strain ED1a)).